Reading from the N-terminus, the 621-residue chain is Kininogen-1 (621 aa).

Positions 1–18 (MKLITILFLCSRLLPSLT) are cleaved as a signal peptide. One can recognise a Cystatin kininogen-type 1 domain in the interval 27–131 (CNDQDVFKAV…IQTCLITPAE (105 aa)). Cystine bridges form between C27–C591, C82–C93, C106–C125, C141–C144, C205–C217, C228–C247, C263–C266, C327–C339, and C350–C369. N-linked (GlcNAc...) asparagine glycosylation is found at N47 and N87. The O-linked (GalNAc...) threonine; partial glycan is linked to T136. Residues 150–253 (TKSPDLEPVL…SQKCDLYPVK (104 aa)) form the Cystatin kininogen-type 2 domain. N168 and N169 each carry an N-linked (GlcNAc...) asparagine glycan. Residue N197 is glycosylated (N-linked (GlcNAc...) asparagine; partial). N204 carries an N-linked (GlcNAc...) asparagine glycan. The region spanning 272 to 375 (VDSPDLEEPL…TVNCQPLGQT (104 aa)) is the Cystatin kininogen-type 3 domain. Residue S331 is modified to Phosphoserine. A disordered region spans residues 396-497 (EGSTTVSLPH…GKNNGKHYDW (102 aa)). S398 carries O-linked (GalNAc...) serine glycosylation. Residues T399 and T400 are each glycosylated (O-linked (GalNAc...) threonine). S406 carries an O-linked (GalNAc...) serine glycan. Positions 444–492 (GHKHKHDQGHGHHGSHGLGHGHQKQHGLGHGHKHGHGHGKHKNKGKNNG) are enriched in basic residues. O-linked (GalNAc...) serine glycosylation is present at S512. Residues T520, T524, T536, T548, T553, and T570 are each glycosylated (O-linked (GalNAc...) threonine). S581 is a glycosylation site (O-linked (GalNAc...) serine).

Bradykinin is released from kininogen by plasma kallikrein. In terms of processing, phosphorylated by FAM20C in the extracellular medium. Post-translationally, bradykinin is inactivated by ACE, which removes the dipeptide Arg-Phe from its C-terminus. As to expression, plasma.

It localises to the secreted. The protein localises to the extracellular space. Its function is as follows. Kininogens are inhibitors of thiol proteases. HMW-kininogen plays an important role in blood coagulation by helping to position optimally prekallikrein and factor XI next to factor XII; HMW-kininogen inhibits the thrombin- and plasmin-induced aggregation of thrombocytes. LMW-kininogen inhibits the aggregation of thrombocytes. LMW-kininogen is in contrast to HMW-kininogen not involved in blood clotting. The active peptide bradykinin is a potent vasodilatator that is released from HMW-kininogen shows a variety of physiological effects: (A) influence in smooth muscle contraction, (B) induction of hypotension, (C) natriuresis and diuresis, (D) decrease in blood glucose level, (E) it is a mediator of inflammation and causes (E1) increase in vascular permeability, (E2) stimulation of nociceptors (4E3) release of other mediators of inflammation (e.g. prostaglandins), (F) it has a cardioprotective effect (directly via bradykinin action, indirectly via endothelium-derived relaxing factor action). The polypeptide is Kininogen-1 (KNG1) (Bos taurus (Bovine)).